Consider the following 199-residue polypeptide: MVKMLVLYYSAYGHMEQMAKAAAEGAREGGAEVTLKRVPELVPEEVAKASHYKIDQEAPIATPGELADYDAIIIGTATRYGMMASQMKNFLDQTGGLWAKGALINKVGSVMVSTATQHGGAELALISTQWQMQHHGMIIVPLSYAYREQMGNDVVRGGAPYGMTTTADGDGSRQPSAQELDDARFQGRRVAEITAKLHG.

The Flavodoxin-like domain maps to 4-190 (MLVLYYSAYG…DDARFQGRRV (187 aa)). Residues 10 to 15 (SAYGHM) and 78 to 80 (TRY) each bind FMN. Tyrosine 12 is a binding site for NAD(+). A substrate-binding site is contributed by tryptophan 98. FMN is bound by residues 113–119 (STATQHG) and histidine 134. The segment at 158–181 (GAPYGMTTTADGDGSRQPSAQELD) is disordered. The span at 163-177 (MTTTADGDGSRQPSA) shows a compositional bias: polar residues.

This sequence belongs to the WrbA family. FMN serves as cofactor.

The catalysed reaction is a quinone + NADH + H(+) = a quinol + NAD(+). It carries out the reaction a quinone + NADPH + H(+) = a quinol + NADP(+). This Brucella ovis (strain ATCC 25840 / 63/290 / NCTC 10512) protein is NAD(P)H dehydrogenase (quinone).